The following is a 284-amino-acid chain: Non-selective voltage-gated ion channel VDAC3 (284 aa).

N-acetylcysteine is present on Cys-2. Thr-4 bears the Phosphothreonine mark. N6-acetyllysine occurs at positions 12, 15, and 20. 2 beta stranded membrane-spanning segments follow: residues 26–35 (MVKIDLKTKS) and 39–48 (VMEFSTSGHA). Lys-54 participates in a covalent cross-link: Glycyl lysine isopeptide (Lys-Gly) (interchain with G-Cter in ubiquitin). Beta stranded transmembrane passes span 55 to 65 (ASGNLETKYKV), 70 to 77 (LTFTQKWN), and 81 to 90 (TLGTEISWEN). Lys-91 is subject to N6-acetyllysine. The beta stranded transmembrane segment at 96-105 (LKLTLDTIFV) threads the bilayer. Glycyl lysine isopeptide (Lys-Gly) (interchain with G-Cter in ubiquitin) cross-links involve residues Lys-110 and Lys-111. 10 beta stranded membrane-spanning segments follow: residues 112–121 (SGKLKASYKR), 124–131 (FSVGSNVD), 138–146 (TIYGWAVLA), 151–159 (LAGYQMSFD), 164–176 (KLSQ…GYKA), 179–186 (FQLHTHVN), 190–199 (EFGGSIYQKV), 203–212 (IETSINLAWT), 219–228 (RFGIAAKYML), and 232–239 (TSLSAKVN). Ser-242 carries the phosphoserine modification. Residues 243-245 (LIG) and 261-265 (SALID) each bind NAD(+). 2 consecutive transmembrane segments (beta stranded) span residues 243 to 252 (LIGLGYTQTL) and 255 to 264 (GVKLTLSALI). Residue Lys-267 is modified to N6-acetyllysine; alternate. Lys-267 is covalently cross-linked (Glycyl lysine isopeptide (Lys-Gly) (interchain with G-Cter in ubiquitin); alternate). Residues 274–283 (HKVGLGFELE) form a beta stranded membrane-spanning segment.

It belongs to the eukaryotic mitochondrial porin family. Interacts with ARMC12 in a TBC1D21-dependent manner. Interacts with MISFA. In terms of processing, ubiquitinated by PRKN during mitophagy, leading to its degradation and enhancement of mitophagy. Deubiquitinated by USP30.

The protein resides in the mitochondrion outer membrane. The protein localises to the membrane. The enzyme catalyses chloride(in) = chloride(out). The catalysed reaction is K(+)(in) = K(+)(out). Non-selective voltage-gated ion channel that mediates the transport of anions and cations through the mitochondrion outer membrane and plasma membrane. Forms a high-conducting channel with a stable open state and a voltage-induced closure with a mild preference for anions over cations. Involved in male fertility and sperm mitochondrial sheath formation. This Pongo abelii (Sumatran orangutan) protein is Non-selective voltage-gated ion channel VDAC3.